Consider the following 460-residue polypeptide: UDP-N-acetylmuramoylalanine--D-glutamate ligase (460 aa).

122 to 128 (GSNGKST) contacts ATP.

The protein belongs to the MurCDEF family.

It localises to the cytoplasm. The catalysed reaction is UDP-N-acetyl-alpha-D-muramoyl-L-alanine + D-glutamate + ATP = UDP-N-acetyl-alpha-D-muramoyl-L-alanyl-D-glutamate + ADP + phosphate + H(+). It participates in cell wall biogenesis; peptidoglycan biosynthesis. Its function is as follows. Cell wall formation. Catalyzes the addition of glutamate to the nucleotide precursor UDP-N-acetylmuramoyl-L-alanine (UMA). The sequence is that of UDP-N-acetylmuramoylalanine--D-glutamate ligase from Jannaschia sp. (strain CCS1).